Reading from the N-terminus, the 130-residue chain is Small ribosomal subunit protein uS11c (130 aa).

This sequence belongs to the universal ribosomal protein uS11 family. As to quaternary structure, part of the 30S ribosomal subunit.

The protein resides in the plastid. The protein localises to the chloroplast. The sequence is that of Small ribosomal subunit protein uS11c from Adiantum capillus-veneris (Maidenhair fern).